Here is a 676-residue protein sequence, read N- to C-terminus: MEKNLPDIFFFPNCVNVFSYKYSQDEFSNMSKTERDSFSLAVFPVIKHRWHNAHVVKHKGIYKVSTEARGKKVSPPSLGKPAHINLTTKQYIYSEHTISFECYSFLKCITNTEINSFDEYILRGLLEAGNSLQIFSNSVGKRTDTIGVLGNKYPFSKIPLASLTPKAQREIFSAWISHRPVVLTGGTGVGKTSQVPKLLLWFNYLFGGFSTLDKITDFHERPVILSLPRIALVRLHSNTILKSLGFKVLDGSPISLRYGSIPEELINKQPKKYGIVFSTHKLSLTKLFSYGTLIIDEVHEHDQIGDIIIAVARKHHTKIDSMFLMTATLEDDRERLKVFLPNPAFIHIPGDTLFKISEVFIHNKINPSSRMAYIEEEKRNLVTAIQMYTPPDGSSGIVFVASVAQCHEYKSYLEKRLPYDMYIIHGKVLDIDEILEKVYSSPNVSIIISTPYLESSVTIRNVTHIYDMGRVFVPAPFGGSQEFISKSMRDQRKGRVGRVNPGTYVYFYDLSYMKSIQRIDSEFLHNYILYANKFNLTLPEDLFIIPTNLDILWRTKEYIDSFDISTETWNKLLSNYYMKMIEYAKLYVLSPILAEELDNFERTGELTSIVREAILSLNLRIKILNFKHKDDDTYIHFCKILFGVYNGTNATIYYHRPLTGYMNMISDTIFVPVDNN.

A Helicase ATP-binding domain is found at 172 to 347 (FSAWISHRPV…VFLPNPAFIH (176 aa)). 185–192 (GGTGVGKT) is a binding site for ATP. The DEXH box signature appears at 296-299 (DEVH). Positions 366 to 535 (NPSSRMAYIE…NYILYANKFN (170 aa)) constitute a Helicase C-terminal domain.

It belongs to the DEAD box helicase family. DEAH subfamily. In terms of assembly, monomer.

Its subcellular location is the virion. It carries out the reaction ATP + H2O = ADP + phosphate + H(+). In terms of biological role, NTP-dependent helicase that catalyzes unidirectional unwinding of 3'tailed duplex RNAs and plays an important role during transcription of early mRNAs, presumably by preventing R-loop formation behind the elongating RNA polymerase. Might also play a role in the export of newly synthesized mRNA chains out of the core into the cytoplasm. Required for replication and propagation of viral particles. The sequence is that of RNA helicase NPH-II (OPG084) from Vaccinia virus (strain Copenhagen) (VACV).